Here is a 55-residue protein sequence, read N- to C-terminus: MKTLALFLVLVCVLGLVQSWEWPWNRKPTKFPIPSPNPRDKWCRLNLGPAWGGRC.

An N-terminal signal peptide occupies residues 1–19 (MKTLALFLVLVCVLGLVQS). Residues 20–33 (WEWPWNRKPTKFPI) are essential for binding to sperm. Residues proline 28 and proline 32 each carry the hydroxyproline modification. An Isoleucine derivative modification is found at isoleucine 33. Hydroxyproline is present on residues proline 34, proline 36, and proline 38. Residues 36–55 (PNPRDKWCRLNLGPAWGGRC) are sufficient to induce PMR. A disulfide bridge links cysteine 43 with cysteine 55.

It belongs to the Drosophila sex peptide family. Sperm-bound protein is cleaved to release an active C-terminal peptide. Gradual release from stored sperm may function to prolong PMR and enhance male reproductive success. Main cells of the accessory glands of males (paragonial gland).

The protein localises to the secreted. In terms of biological role, male seminal protein which triggers short- and long-term post-mating behavioral responses (PMR) in female Drosophila. Binds initially to sperm where it is later cleaved to release an active peptide within the female reproductive tract. Signals via the sex peptide receptor (SPR) in female flies; may also act via other receptors. Moderates the activity of distinct neuronal circuitries in the female genital tract to promote specific PMRs including: enhanced ovulation, increased egg laying rate, increased feeding/foraging rate, induced antimicrobial peptide synthesis, reduced mating receptivity, reduced day-time sleep and reduced lifespan in multiple mated females. The protein is Accessory gland-specific peptide 70A (SP) of Drosophila melanogaster (Fruit fly).